Reading from the N-terminus, the 123-residue chain is MIQERTILNVADNSGARYAMCIKVLGGSGRRYANIGDVIKVAIKEAVPRAKVKKGDVLKAVVVRTKKGVRRLDGSIIRFDNNACVLLNDTNAQPIGTRIFGPVTRELRNEKFMKIISLAPEVL.

This sequence belongs to the universal ribosomal protein uL14 family. As to quaternary structure, part of the 50S ribosomal subunit. Forms a cluster with proteins L3 and L19. In the 70S ribosome, L14 and L19 interact and together make contacts with the 16S rRNA in bridges B5 and B8.

Binds to 23S rRNA. Forms part of two intersubunit bridges in the 70S ribosome. The protein is Large ribosomal subunit protein uL14 of Blochmanniella pennsylvanica (strain BPEN).